The primary structure comprises 200 residues: Dephospho-CoA kinase (200 aa).

The region spanning 4–200 (VIGLTGGIAS…VILKKWNIID (197 aa)) is the DPCK domain. 12 to 17 (ASGKST) lines the ATP pocket.

It belongs to the CoaE family.

The protein resides in the cytoplasm. It catalyses the reaction 3'-dephospho-CoA + ATP = ADP + CoA + H(+). The protein operates within cofactor biosynthesis; coenzyme A biosynthesis; CoA from (R)-pantothenate: step 5/5. In terms of biological role, catalyzes the phosphorylation of the 3'-hydroxyl group of dephosphocoenzyme A to form coenzyme A. This is Dephospho-CoA kinase from Bacillus cereus (strain ATCC 14579 / DSM 31 / CCUG 7414 / JCM 2152 / NBRC 15305 / NCIMB 9373 / NCTC 2599 / NRRL B-3711).